The following is a 275-amino-acid chain: MPVRKYKPTSAGRRNMSVSTFEEITKKEPERSLLEPLRKKAGRNVYGRITVRHRGGGHKRHYRKIDFKRDKVGIPAKVAAIEYDPNRSARIALLHYVDGEKRYILAPLGLNVGDTVMSGPAADIRVGNALPLRQIPLGTQVHNIELEKGRGGVMVRSAGAAAQLMAKEGNYATLRMPSGEVRRVFIECMATIGQVGNLDHQNVRLGKAGRKRWLGRRPEVRGAAMNPRDHPHGGGEGRAPRGMPTPKTKWGKPARGVKTRHNPRTDAFIIRRRTR.

The segment at 219 to 263 (EVRGAAMNPRDHPHGGGEGRAPRGMPTPKTKWGKPARGVKTRHNP) is disordered. Residues 227 to 239 (PRDHPHGGGEGRA) show a composition bias toward basic and acidic residues. Over residues 249–262 (KWGKPARGVKTRHN) the composition is skewed to basic residues.

This sequence belongs to the universal ribosomal protein uL2 family. Part of the 50S ribosomal subunit. Forms a bridge to the 30S subunit in the 70S ribosome.

One of the primary rRNA binding proteins. Required for association of the 30S and 50S subunits to form the 70S ribosome, for tRNA binding and peptide bond formation. It has been suggested to have peptidyltransferase activity; this is somewhat controversial. Makes several contacts with the 16S rRNA in the 70S ribosome. The polypeptide is Large ribosomal subunit protein uL2 (Roseiflexus castenholzii (strain DSM 13941 / HLO8)).